The sequence spans 110 residues: Large ribosomal subunit protein uL22 (110 aa).

This sequence belongs to the universal ribosomal protein uL22 family. As to quaternary structure, part of the 50S ribosomal subunit.

This protein binds specifically to 23S rRNA; its binding is stimulated by other ribosomal proteins, e.g. L4, L17, and L20. It is important during the early stages of 50S assembly. It makes multiple contacts with different domains of the 23S rRNA in the assembled 50S subunit and ribosome. Its function is as follows. The globular domain of the protein is located near the polypeptide exit tunnel on the outside of the subunit, while an extended beta-hairpin is found that lines the wall of the exit tunnel in the center of the 70S ribosome. In Ruthia magnifica subsp. Calyptogena magnifica, this protein is Large ribosomal subunit protein uL22.